The sequence spans 182 residues: NADH-quinone oxidoreductase subunit I (182 aa).

2 4Fe-4S ferredoxin-type domains span residues 52–82 (LTRD…LQKA) and 92–121 (EFFR…LTPD). Cys62, Cys65, Cys68, Cys72, Cys101, Cys104, Cys107, and Cys111 together coordinate [4Fe-4S] cluster.

The protein belongs to the complex I 23 kDa subunit family. As to quaternary structure, NDH-1 is composed of 13 different subunits. Subunits NuoA, H, J, K, L, M, N constitute the membrane sector of the complex. The cofactor is [4Fe-4S] cluster.

Its subcellular location is the cell inner membrane. The enzyme catalyses a quinone + NADH + 5 H(+)(in) = a quinol + NAD(+) + 4 H(+)(out). Its function is as follows. NDH-1 shuttles electrons from NADH, via FMN and iron-sulfur (Fe-S) centers, to quinones in the respiratory chain. The immediate electron acceptor for the enzyme in this species is believed to be ubiquinone. Couples the redox reaction to proton translocation (for every two electrons transferred, four hydrogen ions are translocated across the cytoplasmic membrane), and thus conserves the redox energy in a proton gradient. This is NADH-quinone oxidoreductase subunit I from Pseudomonas putida (strain ATCC 47054 / DSM 6125 / CFBP 8728 / NCIMB 11950 / KT2440).